The chain runs to 360 residues: UDP-N-acetylglucosamine--N-acetylmuramyl-(pentapeptide) pyrophosphoryl-undecaprenol N-acetylglucosamine transferase (360 aa).

UDP-N-acetyl-alpha-D-glucosamine contacts are provided by residues 12-14 (TAG), Ser198, and Gln289.

It belongs to the glycosyltransferase 28 family. MurG subfamily.

The protein localises to the cell membrane. The enzyme catalyses Mur2Ac(oyl-L-Ala-gamma-D-Glu-L-Lys-D-Ala-D-Ala)-di-trans,octa-cis-undecaprenyl diphosphate + UDP-N-acetyl-alpha-D-glucosamine = beta-D-GlcNAc-(1-&gt;4)-Mur2Ac(oyl-L-Ala-gamma-D-Glu-L-Lys-D-Ala-D-Ala)-di-trans,octa-cis-undecaprenyl diphosphate + UDP + H(+). It participates in cell wall biogenesis; peptidoglycan biosynthesis. Cell wall formation. Catalyzes the transfer of a GlcNAc subunit on undecaprenyl-pyrophosphoryl-MurNAc-pentapeptide (lipid intermediate I) to form undecaprenyl-pyrophosphoryl-MurNAc-(pentapeptide)GlcNAc (lipid intermediate II). In Streptococcus equi subsp. zooepidemicus (strain H70), this protein is UDP-N-acetylglucosamine--N-acetylmuramyl-(pentapeptide) pyrophosphoryl-undecaprenol N-acetylglucosamine transferase.